Here is a 216-residue protein sequence, read N- to C-terminus: Endo-1,4-beta-xylanase 2 (216 aa).

Positions 1–27 (MVSFSSLFVAACAAVTAFALPNELEKR) are cleaved as a signal peptide. Positions 28 to 216 (AITSNEQGTN…SSGSASITVS (189 aa)) constitute a GH11 domain. Asparagine 87 carries an N-linked (GlcNAc...) asparagine glycan. The active-site Nucleophile is the glutamate 112. Catalysis depends on glutamate 203, which acts as the Proton donor.

The protein belongs to the glycosyl hydrolase 11 (cellulase G) family.

Its subcellular location is the secreted. It carries out the reaction Endohydrolysis of (1-&gt;4)-beta-D-xylosidic linkages in xylans.. The protein operates within glycan degradation; xylan degradation. Endo-1,4-beta-xylanase involved in the hydrolysis of xylan, a major structural heterogeneous polysaccharide found in plant biomass representing the second most abundant polysaccharide in the biosphere, after cellulose. This chain is Endo-1,4-beta-xylanase 2 (xyn2), found in Rhizopus oryzae (Mucormycosis agent).